The chain runs to 404 residues: Serine/threonine transporter SstT (404 aa).

8 helical membrane-spanning segments follow: residues 17–37, 39–59, 75–95, 138–158, 179–199, 212–232, 287–307, and 313–333; these read IGIG…LTGF, ILGK…VFAL, MTLI…VAVL, ALAT…GLAL, IVVW…FTTI, FLIL…NPLI, IPLG…VLTL, and FGIP…AVSA.

Belongs to the dicarboxylate/amino acid:cation symporter (DAACS) (TC 2.A.23) family.

The protein localises to the cell membrane. It carries out the reaction L-serine(in) + Na(+)(in) = L-serine(out) + Na(+)(out). It catalyses the reaction L-threonine(in) + Na(+)(in) = L-threonine(out) + Na(+)(out). Involved in the import of serine and threonine into the cell, with the concomitant import of sodium (symport system). The chain is Serine/threonine transporter SstT from Streptococcus pyogenes serotype M2 (strain MGAS10270).